A 286-amino-acid polypeptide reads, in one-letter code: Structural protein p32K (286 aa).

Positions 1 to 12 (MYVTNNTALAGG) are cleaved as a propeptide — removed in mature form. A disordered region spans residues 1–41 (MYVTNNTALAGGAYRKRKKKFQRPKPRKRARKSKKPPKSEN). The span at 14–36 (YRKRKKKFQRPKPRKRARKSKKP) shows a compositional bias: basic residues.

The protein belongs to the atadenoviridae p32K protein family.

The protein localises to the virion. This chain is Structural protein p32K, found in Ovine adenovirus D serotype 7 (isolate OAV287) (OAdV-7).